A 313-amino-acid polypeptide reads, in one-letter code: MTQLGFLLFIMIATRVCSAAEENLDTNRWGNSFFSSLPRSCKEIKQEDTKAQDGLYFLRTENGVIYQTFCDMTTAGGGWTLVASVHENNLRGRCTVGDRWSSQQGNRADYPEGDGNWANYNTFGSAEGATSDDYKNPGYFDIQAENLGIWHVPNNSPLHTWRNSSLLRYRTFTGFLQRLGHNLFGLYQKYPVKYGEGKCWTDNGPAFPVVYDFGDAQKTASYYSPSGRNEFTAGYVQFRVFNNERAASALCAGVRVTGCNTEHHCIGGGGFFPEFDPEECGDFAAFDANGYGTHIRYSNSREITEAAVLLFYR.

The signal sequence occupies residues M1–A19. A Fibrinogen C-terminal domain is found at S32–C251. A disulfide bridge links C41 with C70. H86, E87, N89, G92, G97, D98, and D133 together coordinate Ca(2+). Disulfide bonds link C94-C280, C199-C259, and C251-C265. N163 carries N-linked (GlcNAc...) asparagine glycosylation. N260, E262, E274, and D282 together coordinate Ca(2+). A carbohydrate is bound by residues E262–H263 and E274. S298 carries the GPI-anchor amidated serine lipid modification. A propeptide spanning residues N299–R313 is cleaved from the precursor.

In terms of tissue distribution, expressed in the globlet and Paneth cells of the small intestine of infected mice. Expressed in the ileum of uninfected mice.

Its subcellular location is the cell membrane. The protein localises to the secreted. Functionally, may play a protective role in the innate immune response to parasite infection. This chain is Intelectin-1b (Itln1b), found in Mus musculus (Mouse).